A 253-amino-acid polypeptide reads, in one-letter code: MSTQGLVQLLANAQCHLRTSTNYNGVHTQFNSALNYKNNGTNTIDGSEAWCSSIVDTNQYIVAGCEVPRTFMCVALQGRGDADQWVTSYKIRYSLDNVSWFEYRNGAAVTGVTDRNTVVNHFFDTPIRARSIAIHPLTWNGHISLRCEFYTQPVQSSVTQVGADIYTGDNCALNTGSGKREVVVPVKFQFEFATLPKVALNFDQIDCTDATNQTRIGVQPRNITTKGFDCVFYTWNENKVYSLRADYIATALE.

An N-acetylserine modification is found at Ser-2. One can recognise an F5/8 type C domain in the interval 2-152 (STQGLVQLLA…ISLRCEFYTQ (151 aa)). Positions 79–81 (RGD) match the Cell attachment site motif.

As to quaternary structure, tetramer of four different chains (A to D). Stalk cells.

The protein localises to the cytoplasm. Functionally, galactose- and N-acetylgalactosamine-binding lectin. May play a role in cell-substratum adhesion rather than in cell-cell adhesion. May be necessary for the maintenance of normal elongate morphology during aggregation. The protein is Discoidin-1 subunit A (dscA-1) of Dictyostelium discoideum (Social amoeba).